The sequence spans 91 residues: Probable insulin-like peptide gamma-type 1 (91 aa).

An N-terminal signal peptide occupies residues 1–26 (MSSYRQTLFILIILIVIILFVNEGQG). Intrachain disulfides connect Cys37–Cys66, Cys49–Cys79, and Cys65–Cys70.

This sequence belongs to the insulin family.

The protein localises to the secreted. This chain is Probable insulin-like peptide gamma-type 1 (ins-11), found in Caenorhabditis elegans.